The sequence spans 237 residues: C-type lectin domain family 4 member A (237 aa).

At 1-48 (MTSEITYAEVRFKNEFKSSGINTASSAASKERTAPHKSNTGFPKLLCA) the chain is on the cytoplasmic side. The short motif at 5 to 10 (ITYAEV) is the ITIM motif element. A helical; Signal-anchor for type II membrane protein transmembrane segment spans residues 49–69 (SLLIFFLLLAISFFIAFVIFF). The Extracellular portion of the chain corresponds to 70–237 (QKYSQLLEKK…SVCEMMKIHL (168 aa)). Cystine bridges form between Cys-106–Cys-117, Cys-134–Cys-230, and Cys-203–Cys-222. One can recognise a C-type lectin domain in the interval 113 to 231 (FSSNCYFIST…CLGPQRSVCE (119 aa)). Positions 143, 145, and 149 each coordinate Ca(2+). Asn-185 carries an N-linked (GlcNAc...) asparagine glycan. Residues Glu-195, Ser-197, and Glu-201 each coordinate Ca(2+). Residues 195 to 197 (EPS) and Glu-201 contribute to the alpha-D-mannopyranose site. 207-209 (NFR) contributes to the N-acetyl-D-glucosamine binding site. Residues Asn-218, Asp-219, and Glu-231 each contribute to the Ca(2+) site.

May interact with PTPN6 via its ITIM motif. Expressed preferentially in hematopoietic tissues. Expressed in all circulating Ag-presenting cells such as dendritic cells, myeloid cells, monocytes, macrophages, B-cells and epidermal Langerhans cells (at protein level). Expressed in peripheral blood leukocytes, neutrophils, moderate quantities in spleen, lymph node, and bone marrow, and at very low levels in thymus.

It localises to the cell membrane. Its function is as follows. C-type lectin receptor that binds carbohydrates mannose and fucose but also weakly interacts with N-acetylglucosamine (GlcNAc) in a Ca(2+)-dependent manner. Involved in regulating immune reactivity. Once triggered by antigen, it is internalized by clathrin-dependent endocytosis and delivers its antigenic cargo into the antigen presentation pathway resulting in cross-priming of CD8(+) T cells. This cross-presentation and cross-priming are enhanced by TLR7 and TLR8 agonists with increased expansion of the CD8(+) T cells, high production of IFNG and TNF with reduced levels of IL4, IL5 and IL13. In plasmacytoid dendritic cells, inhibits TLR9-mediated IFNA and TNF production. May be involved via its ITIM motif (immunoreceptor tyrosine-based inhibitory motifs) in the inhibition of B-cell-receptor-mediated calcium mobilization and protein tyrosine phosphorylation. In terms of biological role, (Microbial infection) Involved in the interaction between HIV-1 virus and dendritic cells. Enhances HIV-1 binding/entry and virus infection. Requires ITIM motif-associated signal transduction pathway involving phosphatases PTPN6 and PTPN11, SYK, Src kinases and MAP kinases. The chain is C-type lectin domain family 4 member A from Homo sapiens (Human).